Consider the following 259-residue polypeptide: Cytosolic Fe-S cluster assembly factor Nubp2 homolog (259 aa).

14-21 is a binding site for ATP; sequence GKGGVGKS. Positions 188 and 191 each coordinate [4Fe-4S] cluster.

This sequence belongs to the Mrp/NBP35 ATP-binding proteins family. NUBP2/CFD1 subfamily. As to quaternary structure, heterotetramer of 2 Nubp1 and 2 Nubp2 chains. Requires [4Fe-4S] cluster as cofactor.

Its subcellular location is the cytoplasm. Its function is as follows. Component of the cytosolic iron-sulfur (Fe/S) protein assembly (CIA) machinery. Required for maturation of extramitochondrial Fe-S proteins. The Nubp1-Nubp2 heterotetramer forms a Fe-S scaffold complex, mediating the de novo assembly of an Fe-S cluster and its transfer to target apoproteins. In Anopheles gambiae (African malaria mosquito), this protein is Cytosolic Fe-S cluster assembly factor Nubp2 homolog.